A 318-amino-acid chain; its full sequence is GTP cyclohydrolase MptA (318 aa).

This sequence belongs to the GTP cyclohydrolase IV family. Homodimer. Fe(2+) serves as cofactor.

It catalyses the reaction GTP + H2O = 7,8-dihydroneopterin 2',3'-cyclic phosphate + formate + diphosphate + H(+). The protein operates within cofactor biosynthesis; 5,6,7,8-tetrahydromethanopterin biosynthesis. Converts GTP to 7,8-dihydro-D-neopterin 2',3'-cyclic phosphate, the first intermediate in the biosynthesis of coenzyme methanopterin. The chain is GTP cyclohydrolase MptA from Methanosarcina acetivorans (strain ATCC 35395 / DSM 2834 / JCM 12185 / C2A).